The sequence spans 889 residues: Phosphofurin acidic cluster sorting protein 2 (889 aa).

Disordered stretches follow at residues 180-246 (DHED…TSMT), 293-463 (LDME…PDAR), and 687-740 (SSAT…SQGV). Positions 343–358 (SHKEPPSPADVPEKTR) are enriched in basic and acidic residues. 5 positions are modified to phosphoserine: Ser-390, Ser-416, Ser-453, Ser-691, and Ser-694. Composition is skewed to low complexity over residues 687 to 720 (SSAT…KEAS) and 727 to 737 (PSVSGGLSSPS).

The protein belongs to the PACS family. As to quaternary structure, interacts with BID and PKD2. Interacts with SIRT1. Interacts with HDAC1. Interacts with TRPV1. Interacts with WDR37. (Microbial infection) Interacts with HIV-1 Nef. In terms of tissue distribution, broadly expressed, with greatest levels in skeletal muscle followed by heart, brain, pancreas and testis.

Its subcellular location is the endoplasmic reticulum. It is found in the mitochondrion. In terms of biological role, multifunctional sorting protein that controls the endoplasmic reticulum (ER)-mitochondria communication, including the apposition of mitochondria with the ER and ER homeostasis. In addition, in response to apoptotic inducer, translocates BIB to mitochondria, which initiates a sequence of events including the formation of mitochondrial truncated BID, the release of cytochrome c, the activation of caspase-3 thereby causing cell death. May also be involved in ion channel trafficking, directing acidic cluster-containing ion channels to distinct subcellular compartments. The chain is Phosphofurin acidic cluster sorting protein 2 from Homo sapiens (Human).